A 296-amino-acid polypeptide reads, in one-letter code: Bifunctional protein FolD (296 aa).

NADP(+) is bound by residues 166–168, serine 195, and threonine 236; that span reads GRS.

The protein belongs to the tetrahydrofolate dehydrogenase/cyclohydrolase family. Homodimer.

The enzyme catalyses (6R)-5,10-methylene-5,6,7,8-tetrahydrofolate + NADP(+) = (6R)-5,10-methenyltetrahydrofolate + NADPH. It carries out the reaction (6R)-5,10-methenyltetrahydrofolate + H2O = (6R)-10-formyltetrahydrofolate + H(+). Its pathway is one-carbon metabolism; tetrahydrofolate interconversion. In terms of biological role, catalyzes the oxidation of 5,10-methylenetetrahydrofolate to 5,10-methenyltetrahydrofolate and then the hydrolysis of 5,10-methenyltetrahydrofolate to 10-formyltetrahydrofolate. The polypeptide is Bifunctional protein FolD (Dehalococcoides mccartyi (strain ATCC BAA-2100 / JCM 16839 / KCTC 5957 / BAV1)).